The primary structure comprises 150 residues: Protein SprT-like (150 aa).

Positions 6–147 (LQKLTEDISE…CGKCRGKIKR (142 aa)) constitute a SprT-like domain. H67 lines the Zn(2+) pocket. Residue E68 is part of the active site. Residue H71 participates in Zn(2+) binding.

It belongs to the SprT family. Zn(2+) serves as cofactor.

Its subcellular location is the cytoplasm. The polypeptide is Protein SprT-like (ydcK) (Bacillus subtilis (strain 168)).